The chain runs to 337 residues: Nucleoid-associated protein HSM_0096 (337 aa).

This sequence belongs to the YejK family.

It is found in the cytoplasm. It localises to the nucleoid. This Histophilus somni (strain 2336) (Haemophilus somnus) protein is Nucleoid-associated protein HSM_0096.